A 139-amino-acid chain; its full sequence is D-ribose pyranase (139 aa).

His20 serves as the catalytic Proton donor. Residues Asp28, His106, and 128–130 (YAN) each bind substrate.

The protein belongs to the RbsD / FucU family. RbsD subfamily. Homodecamer.

It localises to the cytoplasm. The enzyme catalyses beta-D-ribopyranose = beta-D-ribofuranose. It participates in carbohydrate metabolism; D-ribose degradation; D-ribose 5-phosphate from beta-D-ribopyranose: step 1/2. In terms of biological role, catalyzes the interconversion of beta-pyran and beta-furan forms of D-ribose. The chain is D-ribose pyranase from Haemophilus influenzae (strain 86-028NP).